A 62-amino-acid polypeptide reads, in one-letter code: Translational regulator CsrA (62 aa).

The protein belongs to the CsrA/RsmA family. In terms of assembly, homodimer; the beta-strands of each monomer intercalate to form a hydrophobic core, while the alpha-helices form wings that extend away from the core.

The protein resides in the cytoplasm. A key translational regulator that binds mRNA to regulate translation initiation and/or mRNA stability. Mediates global changes in gene expression, shifting from rapid growth to stress survival by linking envelope stress, the stringent response and the catabolite repression systems. Usually binds in the 5'-UTR; binding at or near the Shine-Dalgarno sequence prevents ribosome-binding, repressing translation, binding elsewhere in the 5'-UTR can activate translation and/or stabilize the mRNA. Its function is antagonized by small RNA(s). This chain is Translational regulator CsrA, found in Pasteurella multocida (strain Pm70).